The following is a 702-amino-acid chain: Arginine decarboxylase 1 (702 aa).

Residue Lys-151 is modified to N6-(pyridoxal phosphate)lysine. Residue 336–346 participates in substrate binding; sequence IDVGGGLGIDY. The segment covering 668 to 686 has biased composition (low complexity); the sequence is ASGESSGMSSDSEGSAAGA. The disordered stretch occupies residues 668–702; the sequence is ASGESSGMSSDSEGSAAGAAEEDDDEWEFMRGLTV.

This sequence belongs to the Orn/Lys/Arg decarboxylase class-II family. SpeA subfamily. Requires pyridoxal 5'-phosphate as cofactor. Mg(2+) is required as a cofactor. In terms of tissue distribution, expressed in roots, leaves and stems (at protein level).

It catalyses the reaction L-arginine + H(+) = agmatine + CO2. The protein operates within amine and polyamine biosynthesis; agmatine biosynthesis; agmatine from L-arginine: step 1/1. The protein is Arginine decarboxylase 1 (ADC1) of Oryza sativa subsp. japonica (Rice).